The sequence spans 310 residues: Cytochrome f (310 aa).

Positions 1–27 (MRRHLSLFLGSLVIGLALLIAPAASWA) are cleaved as a signal peptide. Residues tyrosine 28, cysteine 48, cysteine 51, and histidine 52 each contribute to the heme site. Residues 277–297 (IYGLLAFFAAVALAQIMLVLK) traverse the membrane as a helical segment.

The protein belongs to the cytochrome f family. As to quaternary structure, the 4 large subunits of the cytochrome b6-f complex are cytochrome b6, subunit IV (17 kDa polypeptide, PetD), cytochrome f and the Rieske protein, while the 4 small subunits are PetG, PetL, PetM and PetN. The complex functions as a dimer. It depends on heme as a cofactor.

It localises to the cellular thylakoid membrane. Its function is as follows. Component of the cytochrome b6-f complex, which mediates electron transfer between photosystem II (PSII) and photosystem I (PSI), cyclic electron flow around PSI, and state transitions. The sequence is that of Cytochrome f from Synechococcus sp. (strain CC9605).